Reading from the N-terminus, the 421-residue chain is Diaminobutyrate--2-oxoglutarate transaminase (421 aa).

K267 carries the N6-(pyridoxal phosphate)lysine modification.

It belongs to the class-III pyridoxal-phosphate-dependent aminotransferase family. Homohexamer. Pyridoxal 5'-phosphate serves as cofactor.

The enzyme catalyses L-2,4-diaminobutanoate + 2-oxoglutarate = L-aspartate 4-semialdehyde + L-glutamate. It participates in amine and polyamine biosynthesis; ectoine biosynthesis; L-ectoine from L-aspartate 4-semialdehyde: step 1/3. In terms of biological role, catalyzes reversively the conversion of L-aspartate beta-semialdehyde (ASA) to L-2,4-diaminobutyrate (DABA) by transamination with L-glutamate. Seems to use L-glutamate specifically as the amino group donor to ASA, as it is not active with L-alanine, L-glutamine, L-aspartate and L-lysine, and is only poorly active with L-homoserine. In the reverse reaction, gamma-aminobutyric acid (GABA) and L-ornithine can also be used as amino group donors to 2-oxoglutarate, but with a reduced activity compared to that with DABA. The protein is Diaminobutyrate--2-oxoglutarate transaminase (ectB) of Halomonas elongata (strain ATCC 33173 / DSM 2581 / NBRC 15536 / NCIMB 2198 / 1H9).